The chain runs to 543 residues: Chaperonin GroEL (543 aa).

Residues 29–32 (TLGP), 86–90 (DGTTT), Gly-413, 476–478 (NAA), and Asp-492 each bind ATP.

This sequence belongs to the chaperonin (HSP60) family. In terms of assembly, forms a cylinder of 14 subunits composed of two heptameric rings stacked back-to-back. Interacts with the co-chaperonin GroES.

It is found in the cytoplasm. It catalyses the reaction ATP + H2O + a folded polypeptide = ADP + phosphate + an unfolded polypeptide.. Functionally, together with its co-chaperonin GroES, plays an essential role in assisting protein folding. The GroEL-GroES system forms a nano-cage that allows encapsulation of the non-native substrate proteins and provides a physical environment optimized to promote and accelerate protein folding. The sequence is that of Chaperonin GroEL from Streptococcus pyogenes serotype M5 (strain Manfredo).